A 368-amino-acid chain; its full sequence is Histidinol-phosphate aminotransferase (368 aa).

Lys-226 carries the N6-(pyridoxal phosphate)lysine modification.

Belongs to the class-II pyridoxal-phosphate-dependent aminotransferase family. Histidinol-phosphate aminotransferase subfamily. In terms of assembly, homodimer. The cofactor is pyridoxal 5'-phosphate.

It carries out the reaction L-histidinol phosphate + 2-oxoglutarate = 3-(imidazol-4-yl)-2-oxopropyl phosphate + L-glutamate. It participates in amino-acid biosynthesis; L-histidine biosynthesis; L-histidine from 5-phospho-alpha-D-ribose 1-diphosphate: step 7/9. The polypeptide is Histidinol-phosphate aminotransferase (Colwellia psychrerythraea (strain 34H / ATCC BAA-681) (Vibrio psychroerythus)).